Here is a 212-residue protein sequence, read N- to C-terminus: MTSVLFTSGATVTFRELIEVITSYDFIVETIIGNGITRMIVQYGNEIETGTQKHVSEEFYRQCVEDKELKQSLQLEVVSGSQNDSNVVTYRSNKYRGFEMVVFPFSNDIGSFISESDVVISHAGTGSIIDTLRLEKPLIVVTNDKLMNKHQEEVADELVKLGCCRKMTIEDMKSSQLKDCISEILSGPETFNKLPECSTTEVEGIIYHELVK.

The protein belongs to the glycosyltransferase 28 family. Heterodimer with ALG14 to form a functional enzyme.

Its subcellular location is the endoplasmic reticulum. The catalysed reaction is an N-acetyl-alpha-D-glucosaminyl-diphospho-di-trans,poly-cis-dolichol + UDP-N-acetyl-alpha-D-glucosamine = an N,N'-diacetylchitobiosyl-diphospho-di-trans,poly-cis-dolichol + UDP + H(+). Functionally, involved in protein N-glycosylation. Essential for the second step of the dolichol-linked oligosaccharide pathway. The protein is UDP-N-acetylglucosamine transferase subunit ALG13 (ALG13) of Debaryomyces hansenii (strain ATCC 36239 / CBS 767 / BCRC 21394 / JCM 1990 / NBRC 0083 / IGC 2968) (Yeast).